A 305-amino-acid chain; its full sequence is Methionyl-tRNA formyltransferase (305 aa).

A (6S)-5,6,7,8-tetrahydrofolate-binding site is contributed by serine 111–proline 114.

This sequence belongs to the Fmt family.

The enzyme catalyses L-methionyl-tRNA(fMet) + (6R)-10-formyltetrahydrofolate = N-formyl-L-methionyl-tRNA(fMet) + (6S)-5,6,7,8-tetrahydrofolate + H(+). Its function is as follows. Attaches a formyl group to the free amino group of methionyl-tRNA(fMet). The formyl group appears to play a dual role in the initiator identity of N-formylmethionyl-tRNA by promoting its recognition by IF2 and preventing the misappropriation of this tRNA by the elongation apparatus. In Campylobacter jejuni (strain RM1221), this protein is Methionyl-tRNA formyltransferase.